The following is a 256-amino-acid chain: PHD finger protein ALFIN-LIKE 4 (256 aa).

The disordered stretch occupies residues 149–195 (QSKTANGSSKNKSGSKPPKRPNSDSKPQKQVQAKYEEENGGRGNGGD). The segment covering 154–164 (NGSSKNKSGSK) has biased composition (low complexity). A PHD-type zinc finger spans residues 200-252 (ETICGACGEAYANGEFWICCDICETWFHGKCVRITPAKAEHIKHYKCPGCSNK).

It belongs to the Alfin family. Interacts with H3K4me3 and to a lesser extent with H3K4me2.

The protein localises to the nucleus. Functionally, histone-binding component that specifically recognizes H3 tails trimethylated on 'Lys-4' (H3K4me3), which mark transcription start sites of virtually all active genes. The polypeptide is PHD finger protein ALFIN-LIKE 4 (Oryza sativa subsp. indica (Rice)).